We begin with the raw amino-acid sequence, 327 residues long: Glycerol-3-phosphate dehydrogenase [NAD(P)+] (327 aa).

NADPH-binding residues include W11, H30, and K103. Positions 103, 131, and 133 each coordinate sn-glycerol 3-phosphate. NADPH is bound at residue A135. Residues K186, D243, S253, R254, and N255 each contribute to the sn-glycerol 3-phosphate site. K186 functions as the Proton acceptor in the catalytic mechanism. R254 provides a ligand contact to NADPH. NADPH-binding residues include V281 and E283.

The protein belongs to the NAD-dependent glycerol-3-phosphate dehydrogenase family.

It localises to the cytoplasm. The enzyme catalyses sn-glycerol 3-phosphate + NAD(+) = dihydroxyacetone phosphate + NADH + H(+). The catalysed reaction is sn-glycerol 3-phosphate + NADP(+) = dihydroxyacetone phosphate + NADPH + H(+). It functions in the pathway membrane lipid metabolism; glycerophospholipid metabolism. Its function is as follows. Catalyzes the reduction of the glycolytic intermediate dihydroxyacetone phosphate (DHAP) to sn-glycerol 3-phosphate (G3P), the key precursor for phospholipid synthesis. In Wolbachia sp. subsp. Brugia malayi (strain TRS), this protein is Glycerol-3-phosphate dehydrogenase [NAD(P)+].